A 106-amino-acid polypeptide reads, in one-letter code: Large ribosomal subunit protein uL24 (106 aa).

It belongs to the universal ribosomal protein uL24 family. In terms of assembly, part of the 50S ribosomal subunit.

Its function is as follows. One of two assembly initiator proteins, it binds directly to the 5'-end of the 23S rRNA, where it nucleates assembly of the 50S subunit. Functionally, one of the proteins that surrounds the polypeptide exit tunnel on the outside of the subunit. This Desulforudis audaxviator (strain MP104C) protein is Large ribosomal subunit protein uL24.